The primary structure comprises 505 residues: 2-methylcitrate dehydratase (505 aa).

It belongs to the PrpD family. In terms of assembly, monomer.

It carries out the reaction (2S,3S)-2-methylcitrate = 2-methyl-cis-aconitate + H2O. It catalyses the reaction citrate = D-threo-isocitrate. The protein operates within organic acid metabolism; propanoate degradation. It functions in the pathway carbohydrate metabolism; tricarboxylic acid cycle; isocitrate from oxaloacetate: step 1/2. Its function is as follows. Involved in the catabolism of short chain fatty acids (SCFA) via the tricarboxylic acid (TCA)(acetyl degradation route) and via the 2-methylcitrate cycle I (propionate degradation route). Catalyzes the dehydration of 2-methylcitrate (2-MC) to yield the cis isomer of 2-methyl-aconitate. Could also catalyze the dehydration of citrate and the hydration of cis-aconitate. This chain is 2-methylcitrate dehydratase, found in Mycobacterium tuberculosis (strain ATCC 35801 / TMC 107 / Erdman).